The following is a 197-amino-acid chain: Rac-like GTP-binding protein 5 (197 aa).

13 to 20 (GDGAVGKT) serves as a coordination point for GTP. The short motif at 35–43 (YVPTVFDNF) is the Effector region element. Residues 60-64 (DTAGQ) and 118-121 (TKLD) contribute to the GTP site. Cysteine methyl ester is present on C194. C194 carries the S-geranylgeranyl cysteine lipid modification. Positions 195–197 (AIL) are cleaved as a propeptide — removed in mature form.

This sequence belongs to the small GTPase superfamily. Rho family.

Its subcellular location is the cytoplasm. It is found in the membrane. Its function is as follows. Inactive GDP-bound Rho GTPases reside in the cytosol, are found in a complex with Rho GDP-dissociation inhibitors (Rho GDIs), and are released from the GDI protein in order to translocate to membranes upon activation. The sequence is that of Rac-like GTP-binding protein 5 (RAC5) from Oryza sativa subsp. japonica (Rice).